Consider the following 481-residue polypeptide: Argininosuccinate lyase (481 aa).

Belongs to the lyase 1 family. Argininosuccinate lyase subfamily.

The protein localises to the cytoplasm. It catalyses the reaction 2-(N(omega)-L-arginino)succinate = fumarate + L-arginine. It participates in amino-acid biosynthesis; L-arginine biosynthesis; L-arginine from L-ornithine and carbamoyl phosphate: step 3/3. This chain is Argininosuccinate lyase, found in Methanococcus maripaludis (strain DSM 14266 / JCM 13030 / NBRC 101832 / S2 / LL).